Here is a 395-residue protein sequence, read N- to C-terminus: Acetate kinase (395 aa).

A Mg(2+)-binding site is contributed by Asn7. Lys14 contacts ATP. Arg88 contributes to the substrate binding site. Asp145 serves as the catalytic Proton donor/acceptor. ATP contacts are provided by residues 205-209, 279-281, and 327-331; these read HLGNG, DFR, and GIGEN. Position 381 (Glu381) interacts with Mg(2+).

This sequence belongs to the acetokinase family. Homodimer. Mg(2+) is required as a cofactor. Requires Mn(2+) as cofactor.

Its subcellular location is the cytoplasm. The enzyme catalyses acetate + ATP = acetyl phosphate + ADP. Its pathway is metabolic intermediate biosynthesis; acetyl-CoA biosynthesis; acetyl-CoA from acetate: step 1/2. Catalyzes the formation of acetyl phosphate from acetate and ATP. Can also catalyze the reverse reaction. The sequence is that of Acetate kinase from Campylobacter jejuni subsp. jejuni serotype O:6 (strain 81116 / NCTC 11828).